The chain runs to 64 residues: MLEKCPHASVDCGASKIGITDNDPATATNRRLASTIRKPPIEHAAGPLGSTSRAGHRSYGGVAS.

Residues 35–64 (TIRKPPIEHAAGPLGSTSRAGHRSYGGVAS) are disordered.

This is an uncharacterized protein from Mycobacterium tuberculosis (strain ATCC 25618 / H37Rv).